Consider the following 562-residue polypeptide: Potassium-transporting ATPase potassium-binding subunit (562 aa).

12 helical membrane passes run Gly5–Gly25, Ala65–Phe85, Ile135–Phe155, Leu181–Thr201, Ile257–Phe277, Leu283–Tyr303, Phe331–Val351, Leu358–Gly378, Val381–Val401, Ala422–Pro442, Ile486–Ile506, and Phe528–Pro548.

The protein belongs to the KdpA family. The system is composed of three essential subunits: KdpA, KdpB and KdpC.

The protein localises to the cell membrane. Its function is as follows. Part of the high-affinity ATP-driven potassium transport (or Kdp) system, which catalyzes the hydrolysis of ATP coupled with the electrogenic transport of potassium into the cytoplasm. This subunit binds the extracellular potassium ions and delivers the ions to the membrane domain of KdpB through an intramembrane tunnel. This Alicyclobacillus acidocaldarius subsp. acidocaldarius (strain ATCC 27009 / DSM 446 / BCRC 14685 / JCM 5260 / KCTC 1825 / NBRC 15652 / NCIMB 11725 / NRRL B-14509 / 104-IA) (Bacillus acidocaldarius) protein is Potassium-transporting ATPase potassium-binding subunit.